We begin with the raw amino-acid sequence, 518 residues long: MGTETKSNSYTGQISTSGGNPKVMKDSLSLVRQTVNQQTLSLSQSNQVQNQLNSHSNSNSYPNPSGSENKNENEQNSRDIRAKPEDKSRKEAIVPFVPIFVEEADVIQGAKELLKVIRPTWDLSHVEFKIRVVPQIEDRYPAQNAMVMMTLYSFTDGITNKLVGCFHKEISKLNDENGGSYLPIKTQGLSPVQSEDPVIIEKEDDDEFTDDRAADDGSPVQYSDNVVLVRIYGNKTDLLIDRKAETQNFLLLHTYGLAPSLYATFKNGLVYEYVPGTTLNTDSVLCPEIWPLVARRMAEMHRKVRKHGDSSATKPMPMIWKKTQSFLDLVPERFSDAEKHKRVKETFLPIGRLREEFNKLYEYLEALDSPIVFSHNDLLLGNVIYTQSLNTVNFIDYEYADYNFQAFDIGNHFAEMCGVDEVDYSRYPKREFQLQWLRVYLEEYLQRSNIQNDEVELLYVQVNQFALASHIFWTVWSLLQAEHSTIDFDYVGYAFLRYNEYLARKVEFLSLTAAKNNK.

The segment covering 1–19 (MGTETKSNSYTGQISTSGG) has biased composition (polar residues). Residues 1–88 (MGTETKSNSY…DIRAKPEDKS (88 aa)) form a disordered region. Low complexity predominate over residues 33–68 (QTVNQQTLSLSQSNQVQNQLNSHSNSNSYPNPSGSE). The segment covering 69–88 (NKNENEQNSRDIRAKPEDKS) has biased composition (basic and acidic residues). Residues S190 and S194 each carry the phosphoserine modification.

It belongs to the choline/ethanolamine kinase family.

The protein resides in the cytoplasm. The catalysed reaction is ethanolamine + ATP = phosphoethanolamine + ADP + H(+). Its pathway is phospholipid metabolism; phosphatidylethanolamine biosynthesis; phosphatidylethanolamine from ethanolamine: step 1/3. Its function is as follows. Highly specific for ethanolamine phosphorylation. May be a rate-controlling step in phosphatidylethanolamine biosynthesis. The polypeptide is Ethanolamine kinase (eas) (Drosophila melanogaster (Fruit fly)).